A 131-amino-acid polypeptide reads, in one-letter code: Profilin-6 (131 aa).

Cysteine 13 and cysteine 115 are joined by a disulfide. Positions 81–97 (AVIRGKKGAGGITIKKT) match the Involved in PIP2 interaction motif. Phosphothreonine is present on threonine 111.

Belongs to the profilin family. As to quaternary structure, occurs in many kinds of cells as a complex with monomeric actin in a 1:1 ratio. Phosphorylated by MAP kinases.

The protein localises to the cytoplasm. The protein resides in the cytoskeleton. Binds to actin and affects the structure of the cytoskeleton. At high concentrations, profilin prevents the polymerization of actin, whereas it enhances it at low concentrations. In Phleum pratense (Common timothy), this protein is Profilin-6.